Here is a 241-residue protein sequence, read N- to C-terminus: Glutamate/aspartate import ATP-binding protein GltL (241 aa).

The 235-residue stretch at 2-236 (ITLKNVSKWY…PKSDRAKDFL (235 aa)) folds into the ABC transporter domain. 34 to 41 (GPSGSGKS) contacts ATP.

It belongs to the ABC transporter superfamily. In terms of assembly, the complex is composed of two ATP-binding proteins (GltL), two transmembrane proteins (GltJ and GltK) and a solute-binding protein (GltI).

Its subcellular location is the cell inner membrane. The enzyme catalyses a polar amino acid(out) + ATP + H2O = a polar amino acid(in) + ADP + phosphate + H(+). It carries out the reaction L-glutamate(out) + ATP + H2O = L-glutamate(in) + ADP + phosphate + H(+). It catalyses the reaction L-aspartate(out) + ATP + H2O = L-aspartate(in) + ADP + phosphate + H(+). Functionally, part of the ABC transporter complex GltIJKL involved in glutamate and aspartate uptake. Probably responsible for energy coupling to the transport system. This Escherichia coli O157:H7 protein is Glutamate/aspartate import ATP-binding protein GltL (gltL).